The primary structure comprises 148 residues: Lysozyme C (148 aa).

A signal peptide spans 1–18 (MKALTILGLVLLSVTVQG). The region spanning 19-148 (KIFERCELAR…VSQYVKGCGV (130 aa)) is the C-type lysozyme domain. Cystine bridges form between cysteine 24–cysteine 146, cysteine 48–cysteine 134, cysteine 83–cysteine 99, and cysteine 95–cysteine 113. Residues glutamate 53 and aspartate 71 contribute to the active site.

The protein belongs to the glycosyl hydrolase 22 family. In terms of assembly, monomer.

It localises to the secreted. It catalyses the reaction Hydrolysis of (1-&gt;4)-beta-linkages between N-acetylmuramic acid and N-acetyl-D-glucosamine residues in a peptidoglycan and between N-acetyl-D-glucosamine residues in chitodextrins.. Lysozymes have primarily a bacteriolytic function; those in tissues and body fluids are associated with the monocyte-macrophage system and enhance the activity of immunoagents. Also plays a role in digestion in this species. The polypeptide is Lysozyme C (LYZ) (Semnopithecus entellus (Northern plains gray langur)).